A 383-amino-acid chain; its full sequence is MLISNTYNQHFPQLTQEQLARNATKKVICGMSGGVDSSVSAFILQQQGYQVEGLFMKNWEEDDDTDYCTAAADLADAQAVCDKLGIKLHKINFAAEYWDNVFEHFLTEYKAGRTPNPDILCNKEIKFKAFLEYAAEDLGADYIATGHYVRRAGDNENAKLLRGLDPNKDQSYFLYTLSHKQVGQSLFPVGEIEKPIVRAIAEDLGLITAKKKDSTGICFIGERKFKDFLARYLPAQPGNIRTVDDEIIGRHDGLMYHTLGQRKGLGIGGLKNAGDEAWYVVDKDVENNELIVAQGHDHPRLFSKGLIASQLHWVDREPIRESLRCTVKTRYRQQDIPCVIEPIDDETIRVIFDEPQSAVTPGQSAVFYLGEVCLGGGIIAERI.

Residues 30–37 and methionine 56 each bind ATP; that span reads GMSGGVDS. Residues 116–118 form an interaction with target base in tRNA region; it reads NPD. Cysteine 121 acts as the Nucleophile in catalysis. Cysteines 121 and 218 form a disulfide. Glycine 146 provides a ligand contact to ATP. Residues 168–170 are interaction with tRNA; the sequence is KDQ. Cysteine 218 functions as the Cysteine persulfide intermediate in the catalytic mechanism. Positions 330-331 are interaction with tRNA; that stretch reads RY.

It belongs to the MnmA/TRMU family.

It localises to the cytoplasm. It catalyses the reaction S-sulfanyl-L-cysteinyl-[protein] + uridine(34) in tRNA + AH2 + ATP = 2-thiouridine(34) in tRNA + L-cysteinyl-[protein] + A + AMP + diphosphate + H(+). Its function is as follows. Catalyzes the 2-thiolation of uridine at the wobble position (U34) of tRNA, leading to the formation of s(2)U34. This Haemophilus influenzae (strain ATCC 51907 / DSM 11121 / KW20 / Rd) protein is tRNA-specific 2-thiouridylase MnmA.